A 588-amino-acid chain; its full sequence is Aspartate--tRNA ligase (588 aa).

Glu174 is a binding site for L-aspartate. An aspartate region spans residues 198–201 (QLFK). An L-aspartate-binding site is contributed by Arg220. ATP is bound by residues 220 to 222 (RDE) and Gln229. L-aspartate is bound at residue His448. ATP is bound at residue Glu482. Position 489 (Arg489) interacts with L-aspartate. ATP is bound at residue 534 to 537 (GIDR).

Belongs to the class-II aminoacyl-tRNA synthetase family. Type 1 subfamily. Homodimer.

Its subcellular location is the cytoplasm. It carries out the reaction tRNA(Asp) + L-aspartate + ATP = L-aspartyl-tRNA(Asp) + AMP + diphosphate. Functionally, catalyzes the attachment of L-aspartate to tRNA(Asp) in a two-step reaction: L-aspartate is first activated by ATP to form Asp-AMP and then transferred to the acceptor end of tRNA(Asp). This Xanthomonas euvesicatoria pv. vesicatoria (strain 85-10) (Xanthomonas campestris pv. vesicatoria) protein is Aspartate--tRNA ligase.